A 415-amino-acid chain; its full sequence is Tumor necrosis factor receptor superfamily member 3 (415 aa).

Residues 1 to 30 form the signal peptide; that stretch reads MRLPRASSPCGLAWGPLLLGLSGLLVASQP. Over 31–223 the chain is Extracellular; that stretch reads QLVPPYRIEN…NPPEPGAMLL (193 aa). The N-linked (GlcNAc...) asparagine glycan is linked to Asn40. TNFR-Cys repeat units follow at residues 42–81, 82–124, 125–170, and 171–213; these read TCWD…TVCK, TCPH…KAEC, RCQP…VNCV, and PCKP…TICK. 10 disulfide bridges follow: Cys43-Cys58, Cys59-Cys72, Cys62-Cys80, Cys83-Cys98, Cys101-Cys116, Cys104-Cys124, Cys126-Cys132, Cys139-Cys150, Cys142-Cys169, and Cys172-Cys187. The N-linked (GlcNAc...) asparagine glycan is linked to Asn179. A helical transmembrane segment spans residues 224-244; it reads LAILLSLVLFLLFTTVLACAW. Residues 245–415 are Cytoplasmic-facing; the sequence is MRHPSLCRKL…ETETLGCQDL (171 aa). The disordered stretch occupies residues 261–304; that stretch reads HPEGEESPPCPAPRADPHFPDLAEPLLPMSGDLSPSPAGPPTAP. Residue Ser315 is modified to Phosphoserine. The disordered stretch occupies residues 361 to 399; that stretch reads LGGTRGPGDPPAPPEPPYPTPEEGAPGPSELSTPYQEDG. Pro residues predominate over residues 368-380; it reads GDPPAPPEPPYPT.

Self-associates; dimerization and trimerization are promoted by lymphotoxin (LTA(3)). Associates with TRAF3. Associates with TRAF4. Associates with TRAF5.

The protein localises to the membrane. Its function is as follows. Receptor for the heterotrimeric lymphotoxin containing LTA and LTB, and for TNFS14/LIGHT. Activates NF-kappa-B signaling upon stimulation with lymphotoxin. Promotes apoptosis via TRAF3 and TRAF5. May play a role in the development of lymphoid organs. (Microbial infection) Plays a role in host defense against Zika virus infection. The sequence is that of Tumor necrosis factor receptor superfamily member 3 (Ltbr) from Mus musculus (Mouse).